Reading from the N-terminus, the 684-residue chain is Methionine--tRNA ligase (684 aa).

The 'HIGH' region signature appears at proline 12 to histidine 22. The Zn(2+) site is built by cysteine 143, cysteine 146, cysteine 156, and cysteine 159. The 'KMSKS' region motif lies at lysine 339–serine 343. Residue lysine 342 coordinates ATP. The tRNA-binding domain occupies aspartate 581–glycine 684.

Belongs to the class-I aminoacyl-tRNA synthetase family. MetG type 1 subfamily. As to quaternary structure, homodimer. Zn(2+) serves as cofactor.

It is found in the cytoplasm. The catalysed reaction is tRNA(Met) + L-methionine + ATP = L-methionyl-tRNA(Met) + AMP + diphosphate. Functionally, is required not only for elongation of protein synthesis but also for the initiation of all mRNA translation through initiator tRNA(fMet) aminoacylation. This chain is Methionine--tRNA ligase, found in Neisseria gonorrhoeae (strain ATCC 700825 / FA 1090).